The primary structure comprises 444 residues: ATP-dependent protease ATPase subunit HslU (444 aa).

ATP is bound by residues Val-18, 60–65 (GVGKTE), Asp-258, Glu-323, and Arg-395.

Belongs to the ClpX chaperone family. HslU subfamily. As to quaternary structure, a double ring-shaped homohexamer of HslV is capped on each side by a ring-shaped HslU homohexamer. The assembly of the HslU/HslV complex is dependent on binding of ATP.

The protein resides in the cytoplasm. Its function is as follows. ATPase subunit of a proteasome-like degradation complex; this subunit has chaperone activity. The binding of ATP and its subsequent hydrolysis by HslU are essential for unfolding of protein substrates subsequently hydrolyzed by HslV. HslU recognizes the N-terminal part of its protein substrates and unfolds these before they are guided to HslV for hydrolysis. The protein is ATP-dependent protease ATPase subunit HslU of Thioalkalivibrio sulfidiphilus (strain HL-EbGR7).